Reading from the N-terminus, the 411-residue chain is Peptidyl-prolyl cis-trans isomerase (411 aa).

Serine 2 carries the post-translational modification N-acetylserine. Disordered regions lie at residues isoleucine 54 to proline 127 and asparagine 160 to lysine 302. Positions phenylalanine 61–glutamate 87 are enriched in acidic residues. Serine 80 and serine 81 each carry phosphoserine. Threonine 89 is subject to Phosphothreonine. Composition is skewed to acidic residues over residues glutamate 103–glutamine 118 and glutamate 173–lysine 242. Tyrosine 184 is subject to Phosphotyrosine; by CK2. Phosphoserine; by CK2 is present on serine 186. Positions lysine 251–histidine 260 are enriched in basic residues. Residues lysine 256–lysine 271 carry the Nuclear localization signal motif. A compositionally biased stretch (basic and acidic residues) spans glutamate 261–lysine 296. The region spanning glycine 324–asparagine 411 is the PPIase FKBP-type domain.

The protein belongs to the FKBP-type PPIase family. FKBP3/4 subfamily. In terms of assembly, interacts with NOP53. Post-translationally, phosphorylated at tyrosine and dephosphorylated by the phosphotyrosine-specific phosphoprotein phosphatase PTP1.

The protein localises to the nucleus. Its subcellular location is the nucleolus. The enzyme catalyses [protein]-peptidylproline (omega=180) = [protein]-peptidylproline (omega=0). Its activity is regulated as follows. Inhibited by both FK506 and rapamycin. Functionally, proline isomerase that belongs to an abundant class of enzymes that catalyze the cis-trans isomerization of X-Pro peptide bonds and can accelerate the refolding of proline-containing polypeptides. Specifically binds nuclear localization sequences. May be involved in the assembly or folding of ribosomal proteins. The sequence is that of Peptidyl-prolyl cis-trans isomerase from Saccharomyces cerevisiae (strain ATCC 204508 / S288c) (Baker's yeast).